A 2498-amino-acid polypeptide reads, in one-letter code: Nuclear receptor corepressor 1 (2498 aa).

Disordered stretches follow at residues 1–38, 54–84, 134–169, and 198–223; these read MSSS…QQEY, IQQQ…SGYD, SEVK…SKLS, and QQQL…VEQK. Composition is skewed to basic and acidic residues over residues 71–82, 134–148, and 204–213; these read PVSDRPQDRRSG, SEVK…KHES, and EAAKPPEPEK. An interaction with tbl1xr1-A region spans residues 154 to 304; that stretch reads SGQPGDDQDA…REQNICQRYD (151 aa). Residues 168-208 adopt a coiled-coil conformation; it reads LSKEELIQSMDRVDREIAKVEQQILKLKKKQQQLEEEAAKP. The SANT 1 domain maps to 427-478; sequence QFMNVWTDHEKEIFKEKFVRHPKNFGLIASYLERKNVSDCVLYYYLTKKNEN. Over residues 483–493 the composition is skewed to basic residues; it reads VRRNYPKRRGR. 7 disordered regions span residues 483 to 649, 668 to 912, 1075 to 1122, 1417 to 1436, 1470 to 1583, 1737 to 1851, and 1916 to 1990; these read VRRN…GSKS, NLLQ…FGSR, SLSD…GTPG, DLVS…IMEG, SWGV…QRES, PGTQ…AQES, and PQME…TAHT. 2 stretches are compositionally biased toward basic and acidic residues: residues 502 to 525 and 535 to 548; these read SQEE…KEDE and KEEL…KIDA. The stretch at 502-552 forms a coiled coil; sequence SQEEKEIEKVEEEKADRNDKKEDERREEEEKEEKEELREGAKDKIDAVAED. Residues 582–611 are compositionally biased toward low complexity; the sequence is ASEAAAANAVTTATTAPVTTTSTATTVAPV. Over residues 612–627 the composition is skewed to pro residues; the sequence is PVAPPPEEPTPPPPPQ. The SANT 2 domain maps to 628 to 665; the sequence is EQSLVDHGRNWGAIAKMVGSKSESQCKNFYFNYKRRHN. Residues 689–699 show a composition bias toward polar residues; that stretch reads QCDSIASTVSA. Acidic residues predominate over residues 700 to 719; it reads QEDDENEASNEEENPEDSEG. Low complexity-rich tracts occupy residues 727 to 738 and 761 to 774; these read ESAPSPSPAEAA and DAAS…SPSP. The segment covering 854 to 863 has biased composition (basic and acidic residues); the sequence is MERLMDRAEA. Composition is skewed to polar residues over residues 872-891 and 1102-1122; these read QNIS…SATC and ATSS…GTPG. Over residues 1484–1501 the composition is skewed to basic and acidic residues; the sequence is KMGERSKHEDTKSSDAIR. A compositionally biased stretch (polar residues) spans 1505–1516; that stretch reads TSVVSSGPSVLR. A compositionally biased stretch (low complexity) spans 1545 to 1558; the sequence is PSPMSRSSPMARSA. The stretch at 1765–1804 forms a coiled coil; the sequence is VSAERERERERERERDREREKEQRERESDRERERDRLAHA. Over residues 1767–1802 the composition is skewed to basic and acidic residues; that stretch reads AERERERERERERDREREKEQRERESDRERERDRLA. 2 stretches are compositionally biased toward low complexity: residues 1803 to 1813 and 1820 to 1835; these read HAAAAAAAASA and RPVS…RPSS. Polar residues predominate over residues 1842 to 1851; the sequence is PSPSVRAQES. Basic and acidic residues predominate over residues 1921-1942; that stretch reads AKPKESKNDSARSEENLSRRNA. A compositionally biased stretch (low complexity) spans 1958 to 1980; the sequence is SPYTSSSFSSSKSQSQPSSAVYS. Residues 2012–2016 carry the CORNR box 1 motif; it reads IDVII. The segment at 2022-2109 is disordered; it reads SDKDGRERNS…SPPQQTIPGH (88 aa). Residues 2031-2040 are compositionally biased toward low complexity; that stretch reads SQSSDASSSH. Positions 2043 to 2052 are enriched in basic and acidic residues; the sequence is HRYEAPRETI. Residues 2093–2106 show a composition bias toward polar residues; the sequence is RYRQQQESPPQQTI. A CORNR box 2 motif is present at residues 2123 to 2127; the sequence is ICHII. Residues 2136 to 2145 show a composition bias toward low complexity; sequence PVNQPLQQPP. A disordered region spans residues 2136–2222; sequence PVNQPLQQPP…PISPPQAPML (87 aa). The span at 2146-2175 shows a compositional bias: polar residues; sequence ASTFQSTNPTSTAVRTKASSRFSPESQVQP. The span at 2190-2209 shows a compositional bias: basic and acidic residues; it reads IPDKPRGRPGKSPDRGHISE. The short motif at 2326-2330 is the CORNR box 3 element; that stretch reads LEDII. 2 disordered regions span residues 2344-2446 and 2464-2498; these read DHGV…YNPL and TSMT…DSDE. The span at 2353–2362 shows a compositional bias: polar residues; the sequence is QGNQSGTPNS. Basic residues predominate over residues 2380 to 2394; that stretch reads HKQKLISKYGSRKTK. 2 stretches are compositionally biased toward polar residues: residues 2464–2476 and 2489–2498; these read TSMT…QQSR and QYETLSDSDE.

Belongs to the N-CoR nuclear receptor corepressors family. Forms a large corepressor complex that contains sin3a/b, histone deacetylases hdac1 and hdac2, rbbp4 and possibly rbbp7. Interacts with the thyroid receptor (TR, composed of rxra and thrb) and the retinoid acid receptor (RAR, composed of rxra and rara) in the absence of ligand. Interacts with tbl1xr1-A and possibly tbl1xr1-B. Interacts with zbtb33/kaiso.

Its subcellular location is the nucleus. Its function is as follows. Mediates transcriptional repression by certain nuclear receptors. Participates in complexes which promote histone deacetylation and the formation of repressive chromatin structures which may impede access by the basal transcription machinery. In association with hdac3, may play a role in the regulation of the circadian clock. The sequence is that of Nuclear receptor corepressor 1 (ncor1) from Xenopus laevis (African clawed frog).